Consider the following 115-residue polypeptide: Insulin (115 aa).

Positions Met-1–Thr-26 are cleaved as a signal peptide. Cystine bridges form between Cys-33/Cys-101, Cys-45/Cys-114, and Cys-100/Cys-105. Residues Asp-60 to Ser-92 constitute a propeptide, c peptide.

It belongs to the insulin family. As to quaternary structure, heterodimer of a B chain and an A chain linked by two disulfide bonds.

The protein localises to the secreted. Functionally, insulin decreases blood glucose concentration. It increases cell permeability to monosaccharides, amino acids and fatty acids. It accelerates glycolysis, the pentose phosphate cycle, and glycogen synthesis in liver. The sequence is that of Insulin (ins) from Myxine glutinosa (Atlantic hagfish).